The following is a 101-amino-acid chain: Small ribosomal subunit protein uS14 (101 aa).

The protein belongs to the universal ribosomal protein uS14 family. In terms of assembly, part of the 30S ribosomal subunit. Contacts proteins S3 and S10.

Binds 16S rRNA, required for the assembly of 30S particles and may also be responsible for determining the conformation of the 16S rRNA at the A site. This is Small ribosomal subunit protein uS14 from Aliivibrio fischeri (strain ATCC 700601 / ES114) (Vibrio fischeri).